Reading from the N-terminus, the 115-residue chain is Histidine-rich carboxyl terminus protein 1 (115 aa).

A helical membrane pass occupies residues 9 to 29 (ALVGWITGAAVAVLLLLLLLA). Positions 86–115 (GLHHHHHPRHTPHHLHHHHHPHRHHPRHAR) are disordered. Residues 87 to 115 (LHHHHHPRHTPHHLHHHHHPHRHHPRHAR) are compositionally biased toward basic residues.

The protein localises to the membrane. This Homo sapiens (Human) protein is Histidine-rich carboxyl terminus protein 1 (HRCT1).